Reading from the N-terminus, the 254-residue chain is Phosphoglycerate mutase 1 (254 aa).

Residues 10-17 and 23-24 each bind substrate; these read RHGESTWN and SG. Histidine 11 (tele-phosphohistidine intermediate) is an active-site residue. Residues serine 14 and serine 23 each carry the phosphoserine modification. A Phosphotyrosine modification is found at tyrosine 26. Serine 31 bears the Phosphoserine mark. Substrate contacts are provided by residues arginine 62, 89-92, and lysine 100; that span reads ERHY. The active-site Proton donor/acceptor is glutamate 89. Position 106 is an N6-acetyllysine (lysine 106). Residue 116–117 participates in substrate binding; it reads RR. Serine 118 is modified (phosphoserine). 187-188 contributes to the substrate binding site; it reads GN. Lysine 251 bears the N6-acetyllysine; alternate mark. Lysine 251 bears the N6-succinyllysine; alternate mark. N6-acetyllysine is present on residues lysine 253 and lysine 254.

Belongs to the phosphoglycerate mutase family. BPG-dependent PGAM subfamily. As to quaternary structure, homodimer. Acetylated at Lys-253, Lys-253 and Lys-254 under high glucose condition. Acetylation increases catalytic activity. Under glucose restriction SIRT1 levels dramatically increase and it deacetylates the enzyme.

The catalysed reaction is (2R)-2-phosphoglycerate = (2R)-3-phosphoglycerate. It carries out the reaction (2R)-3-phospho-glyceroyl phosphate = (2R)-2,3-bisphosphoglycerate + H(+). Its function is as follows. Catalyzes the interconversion of 2-phosphoglycerate and 3-phosphoglyceratea crucial step in glycolysis, by using 2,3-bisphosphoglycerate. Also catalyzes the interconversion of (2R)-2,3-bisphosphoglycerate and (2R)-3-phospho-glyceroyl phosphate. This Bos taurus (Bovine) protein is Phosphoglycerate mutase 1.